A 153-amino-acid polypeptide reads, in one-letter code: Protein-export protein SecB (153 aa).

It belongs to the SecB family. In terms of assembly, homotetramer, a dimer of dimers. One homotetramer interacts with 1 SecA dimer.

Its subcellular location is the cytoplasm. Functionally, one of the proteins required for the normal export of preproteins out of the cell cytoplasm. It is a molecular chaperone that binds to a subset of precursor proteins, maintaining them in a translocation-competent state. It also specifically binds to its receptor SecA. The protein is Protein-export protein SecB of Edwardsiella ictaluri (strain 93-146).